The sequence spans 409 residues: Phosphopentomutase (409 aa).

Residues Asp-10, Asp-308, His-313, Asp-349, His-350, and His-361 each contribute to the Mn(2+) site.

The protein belongs to the phosphopentomutase family. The cofactor is Mn(2+).

It is found in the cytoplasm. It catalyses the reaction 2-deoxy-alpha-D-ribose 1-phosphate = 2-deoxy-D-ribose 5-phosphate. The enzyme catalyses alpha-D-ribose 1-phosphate = D-ribose 5-phosphate. Its pathway is carbohydrate degradation; 2-deoxy-D-ribose 1-phosphate degradation; D-glyceraldehyde 3-phosphate and acetaldehyde from 2-deoxy-alpha-D-ribose 1-phosphate: step 1/2. Functionally, isomerase that catalyzes the conversion of deoxy-ribose 1-phosphate (dRib-1-P) and ribose 1-phosphate (Rib-1-P) to deoxy-ribose 5-phosphate (dRib-5-P) and ribose 5-phosphate (Rib-5-P), respectively. The chain is Phosphopentomutase from Buchnera aphidicola subsp. Schizaphis graminum (strain Sg).